A 115-amino-acid polypeptide reads, in one-letter code: Photosystem II reaction center Psb28 protein (115 aa).

Belongs to the Psb28 family. As to quaternary structure, part of the photosystem II complex.

The protein localises to the plastid. Its subcellular location is the chloroplast thylakoid membrane. In Trieres chinensis (Marine centric diatom), this protein is Photosystem II reaction center Psb28 protein.